Here is a 257-residue protein sequence, read N- to C-terminus: NAD-capped RNA hydrolase NudC (257 aa).

Residues Lys25 and Arg69 each contribute to the substrate site. Residues Cys98 and Cys101 each contribute to the Zn(2+) site. Glu111 contacts substrate. Zn(2+)-binding residues include Cys116 and Cys119. Position 124 (Tyr124) interacts with substrate. Residues 125 to 248 enclose the Nudix hydrolase domain; that stretch reads PQIAPCIIVA…TVARRLIEDT (124 aa). A divalent metal cation contacts are provided by Ala158, Glu174, and Glu178. The short motif at 159 to 180 is the Nudix box element; it reads GFVEVGETLEQAVAREVMEESG. A substrate-binding site is contributed by 192–199; it reads QPWPFPQS. Glu219 is an a divalent metal cation binding site. Residue Ala241 participates in substrate binding.

Belongs to the Nudix hydrolase family. NudC subfamily. As to quaternary structure, homodimer. Mg(2+) is required as a cofactor. The cofactor is Mn(2+). Zn(2+) serves as cofactor.

The catalysed reaction is a 5'-end NAD(+)-phospho-ribonucleoside in mRNA + H2O = a 5'-end phospho-adenosine-phospho-ribonucleoside in mRNA + beta-nicotinamide D-ribonucleotide + 2 H(+). The enzyme catalyses NAD(+) + H2O = beta-nicotinamide D-ribonucleotide + AMP + 2 H(+). It carries out the reaction NADH + H2O = reduced beta-nicotinamide D-ribonucleotide + AMP + 2 H(+). Its function is as follows. mRNA decapping enzyme that specifically removes the nicotinamide adenine dinucleotide (NAD) cap from a subset of mRNAs by hydrolyzing the diphosphate linkage to produce nicotinamide mononucleotide (NMN) and 5' monophosphate mRNA. The NAD-cap is present at the 5'-end of some mRNAs and stabilizes RNA against 5'-processing. Has preference for mRNAs with a 5'-end purine. Catalyzes the hydrolysis of a broad range of dinucleotide pyrophosphates. The polypeptide is NAD-capped RNA hydrolase NudC (Escherichia coli O157:H7).